The chain runs to 445 residues: UDP-N-acetylmuramoylalanine--D-glutamate ligase (445 aa).

118–124 lines the ATP pocket; the sequence is GTNGKTT.

The protein belongs to the MurCDEF family.

The protein resides in the cytoplasm. It catalyses the reaction UDP-N-acetyl-alpha-D-muramoyl-L-alanine + D-glutamate + ATP = UDP-N-acetyl-alpha-D-muramoyl-L-alanyl-D-glutamate + ADP + phosphate + H(+). Its pathway is cell wall biogenesis; peptidoglycan biosynthesis. Functionally, cell wall formation. Catalyzes the addition of glutamate to the nucleotide precursor UDP-N-acetylmuramoyl-L-alanine (UMA). In Macrococcus caseolyticus (strain JCSC5402) (Macrococcoides caseolyticum), this protein is UDP-N-acetylmuramoylalanine--D-glutamate ligase.